A 1391-amino-acid polypeptide reads, in one-letter code: DNA-directed RNA polymerase subunit beta' (1391 aa).

The Zn(2+) site is built by cysteine 72, cysteine 74, cysteine 87, and cysteine 90. Residues aspartate 462, aspartate 464, and aspartate 466 each coordinate Mg(2+). Residues cysteine 816, cysteine 890, cysteine 897, and cysteine 900 each coordinate Zn(2+).

It belongs to the RNA polymerase beta' chain family. The RNAP catalytic core consists of 2 alpha, 1 beta, 1 beta' and 1 omega subunit. When a sigma factor is associated with the core the holoenzyme is formed, which can initiate transcription. Mg(2+) is required as a cofactor. The cofactor is Zn(2+).

The enzyme catalyses RNA(n) + a ribonucleoside 5'-triphosphate = RNA(n+1) + diphosphate. In terms of biological role, DNA-dependent RNA polymerase catalyzes the transcription of DNA into RNA using the four ribonucleoside triphosphates as substrates. The sequence is that of DNA-directed RNA polymerase subunit beta' from Neisseria meningitidis serogroup A / serotype 4A (strain DSM 15465 / Z2491).